Here is a 115-residue protein sequence, read N- to C-terminus: NADH-ubiquinone oxidoreductase chain 3 (115 aa).

The next 3 membrane-spanning stretches (helical) occupy residues 4–24 (LTALLINITLSLCLITIAFWL), 55–75 (FFLVAITFLLFDLEIALLLPL), and 86–106 (VMMLTSFILVSVLALGLAYEW).

The protein belongs to the complex I subunit 3 family. Core subunit of respiratory chain NADH dehydrogenase (Complex I) which is composed of 45 different subunits. Interacts with TMEM186. Interacts with TMEM242.

It is found in the mitochondrion inner membrane. The enzyme catalyses a ubiquinone + NADH + 5 H(+)(in) = a ubiquinol + NAD(+) + 4 H(+)(out). Core subunit of the mitochondrial membrane respiratory chain NADH dehydrogenase (Complex I) which catalyzes electron transfer from NADH through the respiratory chain, using ubiquinone as an electron acceptor. Essential for the catalytic activity of complex I. This chain is NADH-ubiquinone oxidoreductase chain 3, found in Isthmomys pirrensis (Mount Pirri Isthmus rat).